The chain runs to 298 residues: Glycine--tRNA ligase alpha subunit (298 aa).

Belongs to the class-II aminoacyl-tRNA synthetase family. In terms of assembly, tetramer of two alpha and two beta subunits.

It is found in the cytoplasm. The catalysed reaction is tRNA(Gly) + glycine + ATP = glycyl-tRNA(Gly) + AMP + diphosphate. The protein is Glycine--tRNA ligase alpha subunit of Lacticaseibacillus paracasei (strain ATCC 334 / BCRC 17002 / CCUG 31169 / CIP 107868 / KCTC 3260 / NRRL B-441) (Lactobacillus paracasei).